The following is a 347-amino-acid chain: Haptoglobin (347 aa).

The signal sequence occupies residues 1-18 (MRALGAVVTLLLWGQLFA). The Sushi domain occupies 31 to 88 (DSCPKPPEIANGYVEHLVRYRCRQFYRLRAEGDGVYTLNDEKQWMNTVAGEKLPECEA). Intrachain disulfides connect Cys52–Cys86, Cys90–Cys207, Cys250–Cys281, and Cys292–Cys322. The Peptidase S1 domain maps to 103–345 (IIGGSMDAKG…LKDWVQETMA (243 aa)). Asn148, Asn182, and Asn264 each carry an N-linked (GlcNAc...) asparagine glycan. Positions 259-264 (VPEKKN) are interaction with CD163.

It belongs to the peptidase S1 family. In terms of assembly, tetramer of two alpha and two beta chains; disulfide-linked. The hemoglobin/haptoglobin complex is composed of a haptoglobin dimer bound to two hemoglobin alpha-beta dimers. Interacts with CD163. Interacts with ERGIC3. As to expression, expressed by the liver and secreted in plasma.

It is found in the secreted. As a result of hemolysis, hemoglobin is found to accumulate in the kidney and is secreted in the urine. Haptoglobin captures, and combines with free plasma hemoglobin to allow hepatic recycling of heme iron and to prevent kidney damage. Haptoglobin also acts as an antioxidant, has antibacterial activity and plays a role in modulating many aspects of the acute phase response. Hemoglobin/haptoglobin complexes are rapidly cleared by the macrophage CD163 scavenger receptor expressed on the surface of liver Kupfer cells through an endocytic lysosomal degradation pathway. This Mus caroli (Ryukyu mouse) protein is Haptoglobin (Hp).